Here is a 298-residue protein sequence, read N- to C-terminus: Acetylglutamate kinase (298 aa).

Substrate contacts are provided by residues 66 to 67, Arg88, and Asn193; that span reads GG.

It belongs to the acetylglutamate kinase family. ArgB subfamily.

It localises to the cytoplasm. The catalysed reaction is N-acetyl-L-glutamate + ATP = N-acetyl-L-glutamyl 5-phosphate + ADP. Its pathway is amino-acid biosynthesis; L-arginine biosynthesis; N(2)-acetyl-L-ornithine from L-glutamate: step 2/4. Catalyzes the ATP-dependent phosphorylation of N-acetyl-L-glutamate. In Methanosphaera stadtmanae (strain ATCC 43021 / DSM 3091 / JCM 11832 / MCB-3), this protein is Acetylglutamate kinase.